The chain runs to 524 residues: Glutamyl-tRNA(Gln) amidotransferase subunit A, mitochondrial (524 aa).

Catalysis depends on charge relay system residues Lys-76 and Ser-171. Residue Ser-195 is the Acyl-ester intermediate of the active site.

It belongs to the amidase family. GatA subfamily. As to quaternary structure, subunit of the heterotrimeric GatCAB amidotransferase (AdT) complex, composed of A (qrsl1), B (gatb) and C (gatc) subunits.

The protein resides in the mitochondrion. It catalyses the reaction L-glutamyl-tRNA(Gln) + L-glutamine + ATP + H2O = L-glutaminyl-tRNA(Gln) + L-glutamate + ADP + phosphate + H(+). Allows the formation of correctly charged Gln-tRNA(Gln) through the transamidation of misacylated Glu-tRNA(Gln) in the mitochondria. The reaction takes place in the presence of glutamine and ATP through an activated gamma-phospho-Glu-tRNA(Gln). The chain is Glutamyl-tRNA(Gln) amidotransferase subunit A, mitochondrial (qrsl1) from Xenopus laevis (African clawed frog).